The sequence spans 186 residues: Ribosome-recycling factor (186 aa).

Belongs to the RRF family.

It is found in the cytoplasm. Functionally, responsible for the release of ribosomes from messenger RNA at the termination of protein biosynthesis. May increase the efficiency of translation by recycling ribosomes from one round of translation to another. The chain is Ribosome-recycling factor from Bartonella tribocorum (strain CIP 105476 / IBS 506).